The chain runs to 256 residues: Thiazole synthase (256 aa).

The Schiff-base intermediate with DXP role is filled by Lys95. 1-deoxy-D-xylulose 5-phosphate is bound by residues Gly156, 182–183 (AG), and 204–205 (NT).

It belongs to the ThiG family. Homotetramer. Forms heterodimers with either ThiH or ThiS.

The protein resides in the cytoplasm. The catalysed reaction is [ThiS sulfur-carrier protein]-C-terminal-Gly-aminoethanethioate + 2-iminoacetate + 1-deoxy-D-xylulose 5-phosphate = [ThiS sulfur-carrier protein]-C-terminal Gly-Gly + 2-[(2R,5Z)-2-carboxy-4-methylthiazol-5(2H)-ylidene]ethyl phosphate + 2 H2O + H(+). It participates in cofactor biosynthesis; thiamine diphosphate biosynthesis. Catalyzes the rearrangement of 1-deoxy-D-xylulose 5-phosphate (DXP) to produce the thiazole phosphate moiety of thiamine. Sulfur is provided by the thiocarboxylate moiety of the carrier protein ThiS. In vitro, sulfur can be provided by H(2)S. This Salmonella arizonae (strain ATCC BAA-731 / CDC346-86 / RSK2980) protein is Thiazole synthase.